Consider the following 289-residue polypeptide: Pantothenate synthetase (289 aa).

An ATP-binding site is contributed by 33 to 40 (MGYLHEGH). His-40 serves as the catalytic Proton donor. Gln-70 serves as a coordination point for (R)-pantoate. Gln-70 is a binding site for beta-alanine. 157–160 (GEKD) is a binding site for ATP. Position 163 (Gln-163) interacts with (R)-pantoate. Residues Val-186 and 194-197 (LSSR) contribute to the ATP site.

Belongs to the pantothenate synthetase family. As to quaternary structure, homodimer.

The protein resides in the cytoplasm. It catalyses the reaction (R)-pantoate + beta-alanine + ATP = (R)-pantothenate + AMP + diphosphate + H(+). It participates in cofactor biosynthesis; (R)-pantothenate biosynthesis; (R)-pantothenate from (R)-pantoate and beta-alanine: step 1/1. Catalyzes the condensation of pantoate with beta-alanine in an ATP-dependent reaction via a pantoyl-adenylate intermediate. This chain is Pantothenate synthetase, found in Anaeromyxobacter dehalogenans (strain 2CP-C).